A 148-amino-acid chain; its full sequence is Snaclec 27 (148 aa).

The N-terminal stretch at 1–23 is a signal peptide; it reads WGDSSSSASACWSCFSLVSGIGA. 3 cysteine pairs are disulfide-bonded: cysteine 27–cysteine 38, cysteine 55–cysteine 144, and cysteine 121–cysteine 136. The C-type lectin domain maps to 34-145; sequence HEGHCYKVFS…CSSTQQFVCK (112 aa).

It belongs to the snaclec family. Heterodimer; disulfide-linked. In terms of tissue distribution, expressed by the venom gland.

The protein resides in the secreted. Functionally, interferes with one step of hemostasis (modulation of platelet aggregation, or coagulation cascade, for example). This Echis ocellatus (Ocellated saw-scaled viper) protein is Snaclec 27.